Reading from the N-terminus, the 399-residue chain is MYHLYSHNDLDGVGCGIVAKLAFGKDVEIRYNSVNGLNAQVQYFLEKAKESNRQDALFITDLAVNEENEERLNEYVHAGGKVKLIDHHKTALHLNEHEWGFVQVEYDDGRLTSATSLLYGYLIENGFMKPTNALDQFTELVRQYDTWEWERYDQKQAKRLNDLFFLLSIDEFEAKMIQRLSTHDEFFFDDFEEKLLDLEDEKIERYLRRKKREMVQTFVHEHCVGIVHAESYHSELGNRLGKDNPHLDYIAILSMGSKRVSLRTIHDYIDVSEIAGRYGGGGHAKASGCSITDEVYELFVAEAFRIDPVRPDAFRNIYNLKGSANGSLYENRAQMRFFLFPLDNEWNIQINGETQDETFAAFEEAEWFIKRNYAASLVRDEVFVAFLAENLKLANQHRK.

Mn(2+) serves as cofactor. It depends on Co(2+) as a cofactor. The cofactor is Mg(2+).

The protein localises to the cytoplasm. Functionally, degrades RNA oligonucleotides with a length of 5 nucleotides in a 3'- to 5'-direction. Less active on shorter RNA oligonucleotides and on those with a length of 24 nucleotides. Prefers RNA oligonucleotides containing adenines rather than cytosines. This Bacillus subtilis (strain 168) protein is Oligoribonuclease NrnB (nrnB).